We begin with the raw amino-acid sequence, 268 residues long: Imidazole glycerol phosphate synthase subunit HisF (268 aa).

Catalysis depends on residues Asp-12 and Asp-131.

The protein belongs to the HisA/HisF family. In terms of assembly, heterodimer of HisH and HisF.

It is found in the cytoplasm. It carries out the reaction 5-[(5-phospho-1-deoxy-D-ribulos-1-ylimino)methylamino]-1-(5-phospho-beta-D-ribosyl)imidazole-4-carboxamide + L-glutamine = D-erythro-1-(imidazol-4-yl)glycerol 3-phosphate + 5-amino-1-(5-phospho-beta-D-ribosyl)imidazole-4-carboxamide + L-glutamate + H(+). Its pathway is amino-acid biosynthesis; L-histidine biosynthesis; L-histidine from 5-phospho-alpha-D-ribose 1-diphosphate: step 5/9. In terms of biological role, IGPS catalyzes the conversion of PRFAR and glutamine to IGP, AICAR and glutamate. The HisF subunit catalyzes the cyclization activity that produces IGP and AICAR from PRFAR using the ammonia provided by the HisH subunit. The protein is Imidazole glycerol phosphate synthase subunit HisF of Chelativorans sp. (strain BNC1).